Consider the following 503-residue polypeptide: Cell wall integrity and stress response component 2 (503 aa).

The first 23 residues, 1–23 (MHLDLIHKSFILVWLIYIRAALA), serve as a signal peptide directing secretion. At 24 to 325 (DQFTYKACYS…KGLSGGAIAG (302 aa)) the chain is on the extracellular side. The region spanning 25–118 (QFTYKACYSA…SSAMNVYINN (94 aa)) is the WSC domain. Residues 124–260 (DSTSSTATST…STPSSTSIGT (137 aa)) form a disordered region. A helical membrane pass occupies residues 326–346 (VVVGVVCGTVALLALALFFFV). Over 347–503 (WKKRRQSSQH…AKDSNNSSLR (157 aa)) the chain is Cytoplasmic. Thr402 is subject to Phosphothreonine. A phosphoserine mark is found at Ser455 and Ser458. Positions 470–503 (IVNPDNVSSNIGSNVSDGDDDYDDAKDSNNSSLR) are disordered.

In terms of processing, N-glycosylated.

Its subcellular location is the cell membrane. This Saccharomyces cerevisiae (strain ATCC 204508 / S288c) (Baker's yeast) protein is Cell wall integrity and stress response component 2 (WSC2).